We begin with the raw amino-acid sequence, 157 residues long: Arginine regulator (157 aa).

It belongs to the ArgR family.

It localises to the cytoplasm. Its pathway is amino-acid degradation; L-arginine degradation via ADI pathway. In terms of biological role, regulates the transcription of the arc operon, involved in arginine catabolism. The protein is Arginine regulator (argR1) of Streptococcus pyogenes serotype M3 (strain SSI-1).